The chain runs to 440 residues: Ribosomal protein uS12 methylthiotransferase RimO (440 aa).

Positions 5-115 (PTVGFVSLGC…VVNAVHEVVP (111 aa)) constitute an MTTase N-terminal domain. Residues Cys14, Cys50, Cys79, Cys148, Cys152, and Cys155 each contribute to the [4Fe-4S] cluster site. The Radical SAM core domain maps to 134–372 (LTPRHYAYLK…MAHQQAISAA (239 aa)). In terms of domain architecture, TRAM spans 375 to 440 (QLKVGKELDV…DEYDLWAEVI (66 aa)).

Belongs to the methylthiotransferase family. RimO subfamily. [4Fe-4S] cluster is required as a cofactor.

Its subcellular location is the cytoplasm. It catalyses the reaction L-aspartate(89)-[ribosomal protein uS12]-hydrogen + (sulfur carrier)-SH + AH2 + 2 S-adenosyl-L-methionine = 3-methylsulfanyl-L-aspartate(89)-[ribosomal protein uS12]-hydrogen + (sulfur carrier)-H + 5'-deoxyadenosine + L-methionine + A + S-adenosyl-L-homocysteine + 2 H(+). Functionally, catalyzes the methylthiolation of an aspartic acid residue of ribosomal protein uS12. This chain is Ribosomal protein uS12 methylthiotransferase RimO, found in Stutzerimonas stutzeri (strain A1501) (Pseudomonas stutzeri).